The chain runs to 369 residues: Chorismate synthase (369 aa).

Residues Arg48 and Arg54 each coordinate NADP(+). FMN-binding positions include 125–127 (RSS), 238–239 (NA), Gly278, 293–297 (KPTSS), and Arg319.

The protein belongs to the chorismate synthase family. Homotetramer. FMNH2 serves as cofactor.

The enzyme catalyses 5-O-(1-carboxyvinyl)-3-phosphoshikimate = chorismate + phosphate. It participates in metabolic intermediate biosynthesis; chorismate biosynthesis; chorismate from D-erythrose 4-phosphate and phosphoenolpyruvate: step 7/7. Catalyzes the anti-1,4-elimination of the C-3 phosphate and the C-6 proR hydrogen from 5-enolpyruvylshikimate-3-phosphate (EPSP) to yield chorismate, which is the branch point compound that serves as the starting substrate for the three terminal pathways of aromatic amino acid biosynthesis. This reaction introduces a second double bond into the aromatic ring system. In Burkholderia mallei (strain ATCC 23344), this protein is Chorismate synthase.